Reading from the N-terminus, the 195-residue chain is 3-isopropylmalate dehydratase small subunit (195 aa).

Belongs to the LeuD family. LeuD type 1 subfamily. As to quaternary structure, heterodimer of LeuC and LeuD.

It catalyses the reaction (2R,3S)-3-isopropylmalate = (2S)-2-isopropylmalate. It participates in amino-acid biosynthesis; L-leucine biosynthesis; L-leucine from 3-methyl-2-oxobutanoate: step 2/4. Catalyzes the isomerization between 2-isopropylmalate and 3-isopropylmalate, via the formation of 2-isopropylmaleate. This chain is 3-isopropylmalate dehydratase small subunit, found in Corynebacterium kroppenstedtii (strain DSM 44385 / JCM 11950 / CIP 105744 / CCUG 35717).